The following is a 997-amino-acid chain: Protein translocase subunit SecA (997 aa).

ATP-binding positions include Gln84, 102–106 (GEGKT), and Asp582. The disordered stretch occupies residues 950 to 997 (PYVPVPEAKPEPSEVFGVERKRATPPPQPGLSRAERRRLMRQEKKRKK). A compositionally biased stretch (basic and acidic residues) spans 957–971 (AKPEPSEVFGVERKR). The span at 984-997 (ERRRLMRQEKKRKK) shows a compositional bias: basic residues.

This sequence belongs to the SecA family. As to quaternary structure, part of the essential Sec protein translocation apparatus which comprises SecA, SecYEG and auxiliary proteins SecDF. Other proteins may also be involved. Monomer and homodimer.

The protein resides in the cell inner membrane. It is found in the cytoplasm. The catalysed reaction is ATP + H2O + cellular proteinSide 1 = ADP + phosphate + cellular proteinSide 2.. Its function is as follows. Part of the Sec protein translocase complex. Interacts with the SecYEG preprotein conducting channel. Has a central role in coupling the hydrolysis of ATP to the transfer of proteins into and across the cell membrane, serving as an ATP-driven molecular motor driving the stepwise translocation of polypeptide chains across the membrane. This Thermus thermophilus (strain ATCC 27634 / DSM 579 / HB8) protein is Protein translocase subunit SecA.